Here is a 455-residue protein sequence, read N- to C-terminus: ATP-dependent protease ATPase subunit HslU (455 aa).

ATP-binding positions include I19, G61 to E66, D268, E333, and R405.

The protein belongs to the ClpX chaperone family. HslU subfamily. In terms of assembly, a double ring-shaped homohexamer of HslV is capped on each side by a ring-shaped HslU homohexamer. The assembly of the HslU/HslV complex is dependent on binding of ATP.

It localises to the cytoplasm. In terms of biological role, ATPase subunit of a proteasome-like degradation complex; this subunit has chaperone activity. The binding of ATP and its subsequent hydrolysis by HslU are essential for unfolding of protein substrates subsequently hydrolyzed by HslV. HslU recognizes the N-terminal part of its protein substrates and unfolds these before they are guided to HslV for hydrolysis. The polypeptide is ATP-dependent protease ATPase subunit HslU (Francisella philomiragia subsp. philomiragia (strain ATCC 25017 / CCUG 19701 / FSC 153 / O#319-036)).